We begin with the raw amino-acid sequence, 189 residues long: Putative transcription factor ovo-like protein 3 (189 aa).

The tract at residues 1–20 is disordered; that stretch reads MPRVFLVRSRRPQPPNWSHL. C2H2-type zinc fingers lie at residues 69–91, 97–119, 125–148, and 164–186; these read LGCP…LKCH, HVCH…MRTH, FRCG…AKVH, and HVCE…RTLH.

The protein belongs to the krueppel C2H2-type zinc-finger protein family.

The protein resides in the nucleus. May act as a transcription regulator. This Mus musculus (Mouse) protein is Putative transcription factor ovo-like protein 3 (Ovol3).